The sequence spans 101 residues: Small ribosomal subunit protein uS14 (101 aa).

The protein belongs to the universal ribosomal protein uS14 family. Part of the 30S ribosomal subunit. Contacts proteins S3 and S10.

Functionally, binds 16S rRNA, required for the assembly of 30S particles and may also be responsible for determining the conformation of the 16S rRNA at the A site. This is Small ribosomal subunit protein uS14 from Neisseria meningitidis serogroup C / serotype 2a (strain ATCC 700532 / DSM 15464 / FAM18).